A 100-amino-acid chain; its full sequence is Esterase PE11 (100 aa).

The PE domain maps to 4–94 (VTTRPDSIGE…TSYWLTELAN (91 aa)).

The protein belongs to the mycobacterial PE family.

The protein localises to the secreted. It localises to the cell wall. It carries out the reaction an acetyl ester + H2O = an aliphatic alcohol + acetate + H(+). The enzyme catalyses a butanoate ester + H2O = an aliphatic alcohol + butanoate + H(+). The catalysed reaction is an octanoate ester + H2O = an aliphatic alcohol + octanoate + H(+). Involved in cell wall lipids remodeling and in virulence. Restricts the biofilm growth and is essential for the optimal intracellular survival of M.tuberculosis. Shows esterase activity with a preference for short-chain esters, particularly pNP-acetate (C2) and pNP-butyrate (C4). Has weaker activity with pNP-octanoate (C8), pNP-laurate (C12) and pNP-myristate (C14). Shows weak long-chain triacylglycerol (TAG) hydrolase activity in vitro. Not necessary for PPE17 stability or for its localization on the mycobacterial surface. The chain is Esterase PE11 from Mycobacterium tuberculosis (strain ATCC 25618 / H37Rv).